We begin with the raw amino-acid sequence, 886 residues long: Semaphorin-6B (886 aa).

Residues 1-26 (MWTPRVPPPRPALSFFLLLLLGVTYG) form the signal peptide. The Extracellular portion of the chain corresponds to 27 to 605 (LFPEEPPPLS…VSVNLLVTSS (579 aa)). In terms of domain architecture, Sema spans 32 to 525 (PPPLSVAPRD…FPRCVVRVPV (494 aa)). N75 is a glycosylation site (N-linked (GlcNAc...) asparagine). 2 disulfides stabilise this stretch: C117/C127 and C145/C154. N-linked (GlcNAc...) asparagine glycans are attached at residues N156 and N292. 2 cysteine pairs are disulfide-bonded: C268–C379 and C293–C338. N-linked (GlcNAc...) asparagine glycosylation is found at N387, N442, and N463. 4 disulfides stabilise this stretch: C487–C519, C528–C546, C534–C580, and C538–C554. The chain crosses the membrane as a helical span at residues 606–626 (VAAFVVGAVVSGFSVGWFVGL). The Cytoplasmic segment spans residues 627–886 (RERRELARRK…TGERTAPPVP (260 aa)). Disordered regions lie at residues 655–677 (RLGE…PGGP), 697–731 (HGGP…AHAL), and 761–886 (EQPQ…PPVP). Residues 662 to 674 (TGPGGRGGAGGGP) show a composition bias toward gly residues. An Omega-N-methylarginine modification is found at R667. The span at 707 to 718 (LLPTPEQTPLPQ) shows a compositional bias: low complexity.

Belongs to the semaphorin family. As to quaternary structure, homodimer. Binds specifically the SH3 domain of the protooncogene C-SRC. As to expression, in adulthood, it is expressed ubiquitously.

It is found in the cell membrane. Functions as a cell surface repellent for mossy fibers of developing neurons in the hippocampus where it plays a role in axon guidance. May function through the PLXNA4 receptor expressed by mossy cell axons. The polypeptide is Semaphorin-6B (Sema6b) (Mus musculus (Mouse)).